The chain runs to 515 residues: 2-isopropylmalate synthase (515 aa).

The Pyruvate carboxyltransferase domain maps to 5–268; sequence LIIFDTTLRD…DLGIDTTQIV (264 aa). Positions 14, 202, 204, and 239 each coordinate Mn(2+). The segment at 396–515 is regulatory domain; sequence KFVSLAQRSE…NADKLNPQRA (120 aa).

The protein belongs to the alpha-IPM synthase/homocitrate synthase family. LeuA type 1 subfamily. Homodimer. Mn(2+) serves as cofactor.

Its subcellular location is the cytoplasm. The enzyme catalyses 3-methyl-2-oxobutanoate + acetyl-CoA + H2O = (2S)-2-isopropylmalate + CoA + H(+). It participates in amino-acid biosynthesis; L-leucine biosynthesis; L-leucine from 3-methyl-2-oxobutanoate: step 1/4. In terms of biological role, catalyzes the condensation of the acetyl group of acetyl-CoA with 3-methyl-2-oxobutanoate (2-ketoisovalerate) to form 3-carboxy-3-hydroxy-4-methylpentanoate (2-isopropylmalate). This is 2-isopropylmalate synthase from Burkholderia pseudomallei (strain 1106a).